Here is a 56-residue protein sequence, read N- to C-terminus: Large ribosomal subunit protein eL40 (56 aa).

Belongs to the eukaryotic ribosomal protein eL40 family.

This is Large ribosomal subunit protein eL40 from Saccharolobus islandicus (strain Y.N.15.51 / Yellowstone #2) (Sulfolobus islandicus).